The sequence spans 1312 residues: Retinoblastoma-like protein A (1312 aa).

Disordered stretches follow at residues 1–67 (MMAH…NNEN), 168–231 (SSSS…KNSS), 336–359 (HNYN…NNNN), 536–611 (NNNN…IYGT), 987–1023 (NNNN…NNNN), 1168–1236 (KKND…NNTE), and 1249–1312 (EESP…RLKS). Positions 10–67 (TNINTKTTAPTTTTTEQQPEQQQQQPEQQQQEKQNNNNNNNNNNNNNNNINNNENNEN) are enriched in low complexity. Positions 36–117 (EQQQQEKQNN…TSSALNVDQD (82 aa)) form a coiled coil. Residues 168–179 (SSSSFQPDNNSK) are compositionally biased toward polar residues. Residues 180–189 (IKGRKIRKTN) are compositionally biased toward basic residues. Residues 195–230 (NNDSNEEEEETTTDTEEEEEEDTLLNENNNSINKNS) adopt a coiled-coil conformation. The segment covering 198–218 (SNEEEEETTTDTEEEEEEDTL) has biased composition (acidic residues). Composition is skewed to low complexity over residues 219-231 (LNEN…KNSS), 337-359 (NYNN…NNNN), and 536-595 (NNNN…SSSS). 3 stretches are compositionally biased toward low complexity: residues 1185–1234 (NNNN…NNNN), 1251–1275 (SPST…NNNK), and 1286–1305 (SPSS…SSSG).

Belongs to the retinoblastoma protein (RB) family.

It localises to the nucleus. Functionally, key regulator of entry into cell division. Directly involved in heterochromatin formation by maintaining overall chromatin structure and, in particular, that of constitutive heterochromatin by stabilizing histone methylation. Controls histone H4 'Lys-20' trimethylation. Probably acts as a transcription repressor by recruiting chromatin-modifying enzymes to promoters. Plays a dual role, regulating cell-cycle progression and transcriptional events leading to terminal differentiation. In the absence of a G1 phase, functions in late G2 controlling the expression of both S-phase and mitotic genes. Controls stalk/spore preference by suppressing the DIF response in cells destined for the spore pathway. DIF is a chlorinated hydroxyphenone made by cells of spore pathway that promotes stalk differentiation. This chain is Retinoblastoma-like protein A, found in Dictyostelium discoideum (Social amoeba).